We begin with the raw amino-acid sequence, 33 residues long: Gastrin (33 aa).

At Q1 the chain carries Pyrrolidone carboxylic acid. F33 carries the post-translational modification Phenylalanine amide.

It belongs to the gastrin/cholecystokinin family.

The protein localises to the secreted. Gastrin stimulates the stomach mucosa to produce and secrete hydrochloric acid and the pancreas to secrete its digestive enzymes. It also stimulates smooth muscle contraction and increases blood circulation and water secretion in the stomach and intestine. The chain is Gastrin (GAST) from Cavia porcellus (Guinea pig).